Consider the following 276-residue polypeptide: ATP synthase subunit a (276 aa).

6 consecutive transmembrane segments (helical) span residues 47–67, 107–127, 152–172, 188–208, 226–246, and 247–267; these read WHIDSLLFSVGLGVLFLWLFY, IAPLGLTIFVWVFLMNLMDLI, DLNVTLGLALSVFALIVFYSI, PFNHWALIPINFVLETVTLVA, LIFILIALMPWWAQFALSVPW, and AIFHILVIVLQAFIFMMLTIV.

This sequence belongs to the ATPase A chain family. In terms of assembly, F-type ATPases have 2 components, CF(1) - the catalytic core - and CF(0) - the membrane proton channel. CF(1) has five subunits: alpha(3), beta(3), gamma(1), delta(1), epsilon(1). CF(0) has three main subunits: a(1), b(2) and c(9-12). The alpha and beta chains form an alternating ring which encloses part of the gamma chain. CF(1) is attached to CF(0) by a central stalk formed by the gamma and epsilon chains, while a peripheral stalk is formed by the delta and b chains.

The protein localises to the cell inner membrane. Functionally, key component of the proton channel; it plays a direct role in the translocation of protons across the membrane. In Shewanella pealeana (strain ATCC 700345 / ANG-SQ1), this protein is ATP synthase subunit a.